We begin with the raw amino-acid sequence, 146 residues long: 3-dehydroquinate dehydratase (146 aa).

Tyrosine 22 (proton acceptor) is an active-site residue. Asparagine 74, histidine 80, and aspartate 87 together coordinate substrate. Histidine 100 serves as the catalytic Proton donor. Substrate-binding positions include 101-102 (LS) and arginine 111.

The protein belongs to the type-II 3-dehydroquinase family. Homododecamer.

The catalysed reaction is 3-dehydroquinate = 3-dehydroshikimate + H2O. The protein operates within metabolic intermediate biosynthesis; chorismate biosynthesis; chorismate from D-erythrose 4-phosphate and phosphoenolpyruvate: step 3/7. Its function is as follows. Catalyzes a trans-dehydration via an enolate intermediate. In Clostridium beijerinckii (strain ATCC 51743 / NCIMB 8052) (Clostridium acetobutylicum), this protein is 3-dehydroquinate dehydratase.